The sequence spans 517 residues: Protein NETWORKED 4B (517 aa).

2 disordered regions span residues 1–29 (MASSTAQSKKQFKRSMTKKSHSWWWDSHN) and 101–159 (LQKN…EDGD). Over residues 10 to 21 (KQFKRSMTKKSH) the composition is skewed to basic residues. One can recognise an NAB domain in the interval 21–101 (HSWWWDSHNC…ERYDQASGEL (81 aa)). Residues 107 to 119 (SEIQSQSSLEISS) show a composition bias toward low complexity. Basic and acidic residues predominate over residues 121-135 (TKEKLSRRQSSHKEE). A coiled-coil region spans residues 156-486 (EDGDEALIRR…EQKREAIRQL (331 aa)).

This sequence belongs to the NET family.

Plant-specific actin binding protein. May be part of a membrane-cytoskeletal adapter complex. The chain is Protein NETWORKED 4B from Arabidopsis thaliana (Mouse-ear cress).